Reading from the N-terminus, the 786-residue chain is Protein translocase subunit SecA 1 (786 aa).

ATP contacts are provided by residues Gln85, 103 to 107 (GEGKT), and Asp491.

It belongs to the SecA family. Monomer and homodimer. Part of the essential Sec protein translocation apparatus which comprises SecA, SecYEG and auxiliary proteins SecDF. Other proteins may also be involved.

It is found in the cell membrane. Its subcellular location is the cytoplasm. It carries out the reaction ATP + H2O + cellular proteinSide 1 = ADP + phosphate + cellular proteinSide 2.. Its function is as follows. Part of the Sec protein translocase complex. Interacts with the SecYEG preprotein conducting channel. Has a central role in coupling the hydrolysis of ATP to the transfer of proteins into and across the cell membrane, serving as an ATP-driven molecular motor driving the stepwise translocation of polypeptide chains across the membrane. In Pediococcus pentosaceus (strain ATCC 25745 / CCUG 21536 / LMG 10740 / 183-1w), this protein is Protein translocase subunit SecA 1.